Reading from the N-terminus, the 946-residue chain is ATP-dependent 6-phosphofructokinase subunit beta (946 aa).

The interval 1–559 (MISIVNGTST…HLANFMAMNT (559 aa)) is N-terminal catalytic PFK domain 1. ATP is bound by residues Gly192, 256 to 257 (RC), and 286 to 289 (GDGS). Asp287 lines the Mg(2+) pocket. Residues 332-334 (SID), Arg369, 376-378 (MGR), Glu433, Arg461, and 467-470 (HVQR) each bind beta-D-fructose 6-phosphate. The active-site Proton acceptor is the Asp334. Positions 560–573 (ANHEKPTLPREKRK) are interdomain linker. The segment at 574 to 946 (KIAIINIGAP…LVGRTRLDKP (373 aa)) is C-terminal regulatory PFK domain 2. Residues Arg644, 702–706 (TISNN), 747–749 (QGG), Lys833, 839–842 (HVQQ), and Arg920 contribute to the beta-D-fructose 2,6-bisphosphate site.

It belongs to the phosphofructokinase type A (PFKA) family. ATP-dependent PFK group I subfamily. Eukaryotic two domain clade 'E' sub-subfamily. In terms of assembly, heterooctamer of 4 alpha and 4 beta chains. Mg(2+) is required as a cofactor.

The protein localises to the cytoplasm. It carries out the reaction beta-D-fructose 6-phosphate + ATP = beta-D-fructose 1,6-bisphosphate + ADP + H(+). It participates in carbohydrate degradation; glycolysis; D-glyceraldehyde 3-phosphate and glycerone phosphate from D-glucose: step 3/4. Its activity is regulated as follows. Allosterically activated by ADP, AMP, or fructose 2,6-bisphosphate, and allosterically inhibited by ATP or citrate. Catalyzes the phosphorylation of D-fructose 6-phosphate to fructose 1,6-bisphosphate by ATP, the first committing step of glycolysis. This chain is ATP-dependent 6-phosphofructokinase subunit beta (PFK2), found in Candida albicans (Yeast).